The sequence spans 296 residues: 4-hydroxy-tetrahydrodipicolinate synthase (296 aa).

Thr49 contributes to the pyruvate binding site. Tyr137 serves as the catalytic Proton donor/acceptor. Lys166 functions as the Schiff-base intermediate with substrate in the catalytic mechanism. Position 208 (Ile208) interacts with pyruvate.

It belongs to the DapA family. As to quaternary structure, homotetramer; dimer of dimers.

Its subcellular location is the cytoplasm. The catalysed reaction is L-aspartate 4-semialdehyde + pyruvate = (2S,4S)-4-hydroxy-2,3,4,5-tetrahydrodipicolinate + H2O + H(+). It functions in the pathway amino-acid biosynthesis; L-lysine biosynthesis via DAP pathway; (S)-tetrahydrodipicolinate from L-aspartate: step 3/4. Catalyzes the condensation of (S)-aspartate-beta-semialdehyde [(S)-ASA] and pyruvate to 4-hydroxy-tetrahydrodipicolinate (HTPA). The polypeptide is 4-hydroxy-tetrahydrodipicolinate synthase (Pelodictyon phaeoclathratiforme (strain DSM 5477 / BU-1)).